The primary structure comprises 313 residues: NADH-ubiquinone oxidoreductase chain 1 (313 aa).

The next 10 helical transmembrane spans lie at 6–26 (IIIIIIIDILVVLILTGFVSL), 31–51 (ILALVQIRIGPALCFFGILTP), 62–82 (FIIFVISFDIIYLIGAMIITA), 84–104 (CIFLGWFYFPIGFILLLDTGF), 109–129 (MLCVHVFCSMFSTFFVGCFLF), 142–162 (MFFSIISESGIFLLYTTIYSL), 183–203 (FYIAGVLFISVFWVSMLLDGL), 216–235 (LVAGLITELSGFFFVLYSVL), 250–270 (LCFGGLFICFKAILILIFGFF), and 286–306 (AFILIFLFYMCVLMFIWLFTT).

The protein belongs to the complex I subunit 1 family.

The protein resides in the mitochondrion inner membrane. The enzyme catalyses a ubiquinone + NADH + 5 H(+)(in) = a ubiquinol + NAD(+) + 4 H(+)(out). Its function is as follows. Core subunit of the mitochondrial membrane respiratory chain NADH dehydrogenase (Complex I) that is believed to belong to the minimal assembly required for catalysis. Complex I functions in the transfer of electrons from NADH to the respiratory chain. The immediate electron acceptor for the enzyme is believed to be ubiquinone. In Leishmania tarentolae (Sauroleishmania tarentolae), this protein is NADH-ubiquinone oxidoreductase chain 1 (ND1).